The following is a 108-amino-acid chain: Placenta-specific protein 9 (108 aa).

The signal sequence occupies residues 1–19; sequence MQALLCALAGLALLRAGTG. Disordered regions lie at residues 18 to 49 and 89 to 108; these read TGEW…SPGC and SNLP…DDGF. Positions 54–91 form a coiled coil; that stretch reads AVQRRLDIMEETVEKTVEHLEAEVTGLLGLLEELASNL.

The protein belongs to the PLAC9 family. In terms of tissue distribution, highly expressed in placenta, and weakly in ovary, testis, and lung.

It localises to the secreted. This is Placenta-specific protein 9 (Plac9) from Mus musculus (Mouse).